Consider the following 602-residue polypeptide: Fumarate reductase flavoprotein subunit (602 aa).

Residues 12-16 (GAGGA), 36-38 (ISK), 44-52 (SHTVAAEGG), 156-158 (HFV), 192-193 (AT), and Asp212 each bind FAD. His45 carries the tele-8alpha-FAD histidine modification. Active-site residues include His233 and Arg249. FAD-binding positions include 356–357 (HY), Glu380, and 391–397 (RLGSNSL). The segment at 581–602 (YGGEADAADKAEAANKKEKANG) is disordered. Residues 587–602 (AADKAEAANKKEKANG) show a composition bias toward basic and acidic residues.

Belongs to the FAD-dependent oxidoreductase 2 family. FRD/SDH subfamily. In terms of assembly, part of an enzyme complex containing four subunits: a flavoprotein (FrdA), an iron-sulfur protein (FrdB), and two hydrophobic anchor proteins (FrdC and FrdD). Can be cross-linked to SdhE. Purified from membrane fractions associated with protoporphyrinogen IX dehydrogenase (hemG). FAD is required as a cofactor.

The protein localises to the cell inner membrane. It catalyses the reaction a quinone + succinate = fumarate + a quinol. The catalysed reaction is a menaquinone + succinate = a menaquinol + fumarate. Inhibited by oxaloacetate, a substrate analog. Its function is as follows. Two distinct, membrane-bound, FAD-containing enzymes are responsible for the catalysis of fumarate and succinate interconversion; fumarate reductase is used during anaerobic growth, and succinate dehydrogenase is used during aerobic growth. The QFR enzyme complex binds 2 quinones in or near the membrane; 1 near the [3Fe-4S] cluster (QP is proximal to the [3Fe-4S] cluster, on the cytoplasmic side of the membrane) while QD (the distal cluster) is on the other side of the membrane. It is not clear if both of the quinol-binding sites are functionally relevant. The chain is Fumarate reductase flavoprotein subunit (frdA) from Escherichia coli (strain K12).